The primary structure comprises 463 residues: Pentatricopeptide repeat-containing protein At2g17670 (463 aa).

Positions 1–63 are disordered; that stretch reads MGKVPSSFRS…PSLRNPFKSP (63 aa). 9 PPR repeats span residues 121–157, 158–192, 193–223, 229–263, 264–298, 299–333, 334–368, 369–403, and 404–438; these read GRST…GLEP, DQVT…HSPP, DTYT…MRDD, DLVS…GFKP, DCFL…GVEP, DQIT…GYEP, DTAT…GCAP, NDCT…GVKL, and ESNG…KSLS.

This sequence belongs to the PPR family. P subfamily.

The protein is Pentatricopeptide repeat-containing protein At2g17670 of Arabidopsis thaliana (Mouse-ear cress).